The following is an 843-amino-acid chain: MTDVEGYQPKSKGKIFPDMGESFFSSDEDSPATDAEIDENYDDNRETSEGRGERDTGAMVTGLKKPRKKTKSSRHTAADSSMNQMDAKDKALLQDTNSDIPADFVPDSVSGMFRSHDFSYLRLRPDHASRPLWISPSDGRIILESFSPLAEQAQDFLVTIAEPISRPSHIHEYKITAYSLYAAVSVGLETDDIISVLDRLSKVPVAESIINFIKGATISYGKVKLVIKHNRYFVETTQADILQMLLNDSVIGPLRIDSDHQVQPPEDVLQQQLQQTAGKPATNVNPNDVEAVFSAVIGGDNEREEEDDDIDAVHSFEIANESVEVVKKRCQEIDYPVLEEYDFRNDHRNPDLDIDLKPSTQIRPYQEKSLSKMFGNGRARSGIIVLPCGAGKTLVGITAACTIKKSVIVLCTSSVSVMQWRQQFLQWCTLQPENCAVFTSDNKEMFQTESGLVVSTYSMVANTRNRSHDSQKVMDFLTGREWGFIILDEVHVVPAAMFRRVVSTIAAHAKLGLTATLVREDDKIGDLNFLIGPKLYEANWMELSQKGHIANVQCAEVWCPMTAEFYQEYLRETARKRMLLYIMNPTKFQACQFLIQYHERRGDKIIVFSDNVYALQEYALKMGKPFIYGSTPQQERMNILQNFQYNDQINTIFLSKVGDTSIDLPEATCLIQISSHYGSRRQEAQRLGRILRAKRRNDEGFNAFFYSLVSKDTQEMYYSTKRQAFLVDQGYAFKVITHLHGMENIPNLAYASPRERRELLQEVLLKNEEAAGIEVGDDADNSVGRGSNGHKRFKSKAVRGEGSLSGLAGGEDMAYMEYSTNKNKELKEHHPLIRKMYYKNLKK.

The interval 1–85 is disordered; that stretch reads MTDVEGYQPK…TAADSSMNQM (85 aa). A compositionally biased stretch (acidic residues) spans 26 to 41; it reads SDEDSPATDAEIDENY. Basic and acidic residues predominate over residues 42–56; it reads DDNRETSEGRGERDT. Over residues 64–74 the composition is skewed to basic residues; sequence KKPRKKTKSSR. A Nuclear localization signal motif is present at residues 64–75; that stretch reads KKPRKKTKSSRH. A Helicase ATP-binding domain is found at 373-535; sequence MFGNGRARSG…DLNFLIGPKL (163 aa). 386-393 contacts ATP; sequence LPCGAGKT. The DEAH box motif lies at 488–491; it reads DEVH. In terms of domain architecture, Helicase C-terminal spans 589 to 743; the sequence is QACQFLIQYH…KVITHLHGME (155 aa). S752 carries the post-translational modification Phosphoserine.

Belongs to the helicase family. RAD25/XPB subfamily. As to quaternary structure, component of the 7-subunit TFIIH core complex composed of XPB/SSL2, XPD/RAD3, SSL1, TFB1, TFB2, TFB4 and TFB5, which is active in NER. The core complex associates with the 3-subunit CTD-kinase module TFIIK composed of CCL1, KIN28 and TFB3 to form the 10-subunit holoenzyme (holo-TFIIH) active in transcription. An additionnal subunit, TFB6, plays a role in the dissociation of the SSL2 helicase from TFIIH after transcription initiation. Interacts directly with TFB6. The cofactor is Mg(2+).

The protein resides in the nucleus. The enzyme catalyses Couples ATP hydrolysis with the unwinding of duplex DNA by translocating in the 3'-5' direction.. It catalyses the reaction ATP + H2O = ADP + phosphate + H(+). Functionally, ATP-dependent DNA translocase. Component of the general transcription and DNA repair factor IIH (TFIIH) core complex. When complexed to CDK-activating kinase (CAK), involved in RNA transcription by RNA polymerase II. May have 3'-5' helicase activity alone, the TFIIH core however has no 3'-5' helicase activity. Also involved in transcription-coupled nucleotide excision repair (NER) of damaged DNA. In NER, TFIIH acts by opening DNA around the lesion to allow the excision of the damaged oligonucleotide and its replacement by a new DNA fragment. The ATPase activity of XPB/SSL2, but not its helicase activity, is required for DNA opening. In transcription, TFIIH has an essential role in transcription initiation. When the pre-initiation complex (PIC) has been established, TFIIH is required for promoter opening and promoter escape. The ATP-dependent helicase activity of XPB/SSL2 is required for promoter opening and promoter escape. XPB/SSL2 acts as a double-stranded DNA translocase, promoting DNA opening by tracking in a 5'-3' dirction along the nontemplate promoter strand, rotating and inserting DNA into the Pol II active site cleft, leading to DNA unwinding. A dsDNA-stimulated ATPase, dATP and ATP are equally good substrates. May also use this translocase mechanism during DNA repair rather than physically wedging open damaged DNA. The sequence is that of General transcription and DNA repair factor IIH helicase/translocase subunit XPB/SSL2 from Saccharomyces cerevisiae (strain ATCC 204508 / S288c) (Baker's yeast).